A 446-amino-acid polypeptide reads, in one-letter code: Exodeoxyribonuclease 7 large subunit (446 aa).

It belongs to the XseA family. In terms of assembly, heterooligomer composed of large and small subunits.

Its subcellular location is the cytoplasm. It catalyses the reaction Exonucleolytic cleavage in either 5'- to 3'- or 3'- to 5'-direction to yield nucleoside 5'-phosphates.. Its function is as follows. Bidirectionally degrades single-stranded DNA into large acid-insoluble oligonucleotides, which are then degraded further into small acid-soluble oligonucleotides. In Streptococcus thermophilus (strain CNRZ 1066), this protein is Exodeoxyribonuclease 7 large subunit.